Here is a 280-residue protein sequence, read N- to C-terminus: Phosphatidylglycerol--prolipoprotein diacylglyceryl transferase (280 aa).

The next 4 membrane-spanning stretches (helical) occupy residues 12–32 (FGPF…LIGL), 52–72 (LLPL…VAFE), 86–106 (IWEG…TLIL), and 115–133 (FWDV…QSIG). A 1,2-diacyl-sn-glycero-3-phospho-(1'-sn-glycerol) is bound at residue R134. 3 helical membrane-spanning segments follow: residues 173 to 193 (PTFL…ILLF), 203 to 223 (LPAG…RVWI), and 246 to 266 (IAQL…WWLY).

The protein belongs to the Lgt family.

The protein resides in the cell inner membrane. The catalysed reaction is L-cysteinyl-[prolipoprotein] + a 1,2-diacyl-sn-glycero-3-phospho-(1'-sn-glycerol) = an S-1,2-diacyl-sn-glyceryl-L-cysteinyl-[prolipoprotein] + sn-glycerol 1-phosphate + H(+). It participates in protein modification; lipoprotein biosynthesis (diacylglyceryl transfer). Catalyzes the transfer of the diacylglyceryl group from phosphatidylglycerol to the sulfhydryl group of the N-terminal cysteine of a prolipoprotein, the first step in the formation of mature lipoproteins. This Synechococcus sp. (strain CC9902) protein is Phosphatidylglycerol--prolipoprotein diacylglyceryl transferase.